The sequence spans 249 residues: 2,3-bisphosphoglycerate-dependent phosphoglycerate mutase (249 aa).

Substrate-binding positions include 8 to 15 (RHGESTWN), 21 to 22 (TG), R60, 87 to 90 (ERHY), K98, 114 to 115 (RR), and 183 to 184 (GN). H9 (tele-phosphohistidine intermediate) is an active-site residue. The active-site Proton donor/acceptor is E87.

Belongs to the phosphoglycerate mutase family. BPG-dependent PGAM subfamily. As to quaternary structure, homodimer.

The catalysed reaction is (2R)-2-phosphoglycerate = (2R)-3-phosphoglycerate. It functions in the pathway carbohydrate degradation; glycolysis; pyruvate from D-glyceraldehyde 3-phosphate: step 3/5. Catalyzes the interconversion of 2-phosphoglycerate and 3-phosphoglycerate. This Aromatoleum aromaticum (strain DSM 19018 / LMG 30748 / EbN1) (Azoarcus sp. (strain EbN1)) protein is 2,3-bisphosphoglycerate-dependent phosphoglycerate mutase.